A 3011-amino-acid chain; its full sequence is Genome polyprotein (3011 aa).

Ser-2 bears the N-acetylserine; by host mark. Positions 2–23 (STNPKPQKKNKRNTNRRPQDVK) are interaction with STAT1. The segment at 2 to 58 (STNPKPQKKNKRNTNRRPQDVKFPGGGQIVGGVYLLPRRGPRLGVRATRKTSERSQP) is interaction with EIF2AK2/PKR. Residues 2-59 (STNPKPQKKNKRNTNRRPQDVKFPGGGQIVGGVYLLPRRGPRLGVRATRKTSERSQPR) form an interaction with DDX3X region. A disordered region spans residues 2-75 (STNPKPQKKN…PKARRPEGRT (74 aa)). Over 2–168 (STNPKPQKKN…EDGVNYATGN (167 aa)) the chain is Cytoplasmic. 2 consecutive short sequence motifs (nuclear localization signal) follow at residues 5–13 (PKPQKKNKR) and 38–43 (PRRGPR). Over residues 7 to 16 (PQKKNKRNTN) the composition is skewed to basic residues. Positions 32 to 47 (GGVYLLPRRGPRLGVR) are enriched in low complexity. Ser-53 bears the Phosphoserine; by host mark. 2 short sequence motifs (nuclear localization signal) span residues 58-64 (PRGRRQP) and 66-71 (PKARRP). A compositionally biased stretch (basic residues) spans 58-68 (PRGRRQPIPKA). A Phosphoserine; by host modification is found at Ser-99. The interval 112–152 (PRRRSRNLGKVIDTLTCGFADLMGYIPLVGAPLGGAARALA) is important for endoplasmic reticulum and mitochondrial localization. Ser-116 carries the post-translational modification Phosphoserine; by host PKA. The tract at residues 122 to 173 (VIDTLTCGFADLMGYIPLVGAPLGGAARALAHGVRVLEDGVNYATGNLPGCS) is interaction with APOA2. The interval 164-167 (YATG) is important for lipid droplets localization. A helical membrane pass occupies residues 169 to 189 (LPGCSFSIFLLALLSCLTVPA). The propeptide at 178 to 191 (LLALLSCLTVPASA) is ER anchor for the core protein, removed in mature form by host signal peptidase. The Lumenal segment spans residues 190–358 (SAYQVRNSTG…AGAHWGVLAG (169 aa)). 3 N-linked (GlcNAc...) asparagine; by host glycosylation sites follow: Asn-196, Asn-209, and Asn-234. Residues 265–296 (LVGSATLCSALYVGDLCGSVFLVGQLFTFSPR) form an important for fusion region. Asn-305 carries N-linked (GlcNAc...) asparagine; by host glycosylation. Residues 359–379 (IAYFSMVGNWAKVLVVLLLFA) form a helical membrane-spanning segment. The Lumenal portion of the chain corresponds to 380–725 (GVDAETHVTG…WEYVVLLFLL (346 aa)). The interval 385 to 411 (THVTGGSAGHTVSGFVSLLAPGAKQNV) is HVR1. 4 N-linked (GlcNAc...) (high mannose) asparagine; by host glycosylation sites follow: Asn-417, Asn-423, Asn-430, and Asn-448. Cystine bridges form between Cys-429–Cys-552, Cys-452–Cys-459, Cys-486–Cys-494, and Cys-503–Cys-508. The interval 474–480 (YANGSGP) is HVR2. Residue Asn-476 is glycosylated (N-linked (GlcNAc...) asparagine; by host). The CD81-binding 1 stretch occupies residues 481–493 (DQRPYCWHYPPKP). An N-linked (GlcNAc...) (high mannose) asparagine; by host glycan is attached at Asn-532. A CD81-binding 2 region spans residues 543–551 (RPPLGNWFG). A glycan (N-linked (GlcNAc...) (high mannose) asparagine; by host) is linked at Asn-556. Cys-564 and Cys-569 are disulfide-bonded. N-linked (GlcNAc...) (high mannose) asparagine; by host glycosylation occurs at Asn-576. Intrachain disulfides connect Cys-581-Cys-585, Cys-597-Cys-620, and Cys-607-Cys-644. N-linked (GlcNAc...) (high mannose) asparagine; by host glycans are attached at residues Asn-623 and Asn-645. A disulfide bridge connects residues Cys-652 and Cys-677. The segment at 660 to 671 (SELSPLLLTTTQ) is EIF2AK2/eIF2-alpha phosphorylation homology domain (PePHD). The chain crosses the membrane as a helical span at residues 726–746 (LADARVCSCLWMMLLISQAEA). Topologically, residues 747 to 757 (ALENLVILNAA) are lumenal. A helical membrane pass occupies residues 758–778 (SLAGTHGLVSFLVFFCFAWYL). At 779–781 (KGK) the chain is on the cytoplasmic side. The helical transmembrane segment at 782-803 (WVPGAVYTFYGMWPLLLLLLAL) threads the bilayer. The Lumenal portion of the chain corresponds to 804–813 (PQRAYALDTE). The chain crosses the membrane as a helical span at residues 814-834 (VAASCGGVVLVGLMALTLSPY). The Cytoplasmic portion of the chain corresponds to 835–838 (YKRY). A helical membrane pass occupies residues 839–859 (ISWCLWWLQYFLTRVEAQLHV). Topologically, residues 860-881 (WIPPLNVRGGRDAVILLMCAVH) are lumenal. The helical transmembrane segment at 882 to 902 (PTLVFDITKLLLAVFGPLWIL) threads the bilayer. Residues 899–1026 (LWILQASLLK…GMVSKGWRLL (128 aa)) form the Peptidase C18 domain. The Cytoplasmic portion of the chain corresponds to 903–1657 (QASLLKVPYF…CMSADLEVVT (755 aa)). Residues 904–1206 (ASLLKVPYFV…PVENLETTMR (303 aa)) are protease NS2-3. Residue Cys-922 is the site of S-palmitoyl cysteine; by host attachment. The interaction with host SCPS1 stretch occupies residues 929–949 (IGGHYVQMVIIKLGALTGTYV). Catalysis depends on for protease NS2 activity; shared with dimeric partner residues His-952, Glu-972, and Cys-993. Residues 1027 to 1208 (APITAYAQQT…ENLETTMRSP (182 aa)) form the Peptidase S29 domain. Active-site charge relay system; for serine protease NS3 activity residues include His-1083 and Asp-1107. Residues Cys-1123 and Cys-1125 each coordinate Zn(2+). The Charge relay system; for serine protease NS3 activity role is filled by Ser-1165. Residues Cys-1171 and His-1175 each coordinate Zn(2+). The region spanning 1217–1369 (PVVPQSFQVA…PNIEEVALST (153 aa)) is the Helicase ATP-binding domain. Residue 1230–1237 (APTGSGKS) coordinates ATP. Mg(2+) is bound by residues Ser-1237 and Glu-1317. Positions 1316 to 1319 (DECH) match the DECH box motif. Residues 1486–1497 (QRRGRTGRGKPG) are RNA-binding. A helical membrane pass occupies residues 1658–1678 (STWVLVGGVLAALAAYCLSTG). The segment at 1679–1690 (CVVIVGRVVLSG) is NS3-binding. At 1679–1805 (CVVIVGRVVL…AVTSPLTTSQ (127 aa)) the chain is on the cytoplasmic side. The chain crosses the membrane as a helical span at residues 1806-1826 (TLLFNILGGWVAAQLAAPGAA). The Lumenal portion of the chain corresponds to 1827 to 1828 (TA). Residues 1829 to 1849 (FVGAGLAGAAIGSVGLGKVLI) form a helical membrane-spanning segment. The segment at 1833 to 1861 (GLAGAAIGSVGLGKVLIDILAGYGAGVAG) is glycine zipper. A topological domain (cytoplasmic) is located at residue Asp-1850. The helical transmembrane segment at 1851-1871 (ILAGYGAGVAGALVAFKIMSG) threads the bilayer. Over 1872-1881 (EVPSTEDLVN) the chain is Lumenal. Residues 1882 to 1902 (LLPAILSPGALVVGVVCAAIL) form a helical membrane-spanning segment. Over 1903-1972 (RRHVGPGEGA…WISSECTTPC (70 aa)) the chain is Cytoplasmic. S-palmitoyl cysteine; by host attachment occurs at residues Cys-1968 and Cys-1972. The stretch at 1973-2003 (SGSWLRDIWDWICEVLSDFKTWLKAKLMPQL) is an intramembrane region. The segment at 1978-1998 (RDIWDWICEVLSDFKTWLKAK) is membrane-binding. At 2004–2990 (PGIPFVSCQR…YHSVSHARPR (987 aa)) the chain is on the cytoplasmic side. Residues 2005 to 2221 (GIPFVSCQRG…KATCTANHDS (217 aa)) form an RNA-binding region. Residues Cys-2011, Cys-2029, Cys-2031, and Cys-2052 each coordinate Zn(2+). The tract at residues 2120 to 2208 (EFFTELDGVR…ASSSASQLSA (89 aa)) is FKBP8-binding. A transcriptional activation region spans residues 2120-2332 (EFFTELDGVR…PVPPPRKKRT (213 aa)). Positions 2135-2139 (PPCKP) are interaction with non-structural protein 4A. Residues 2189 to 2441 (RLARGSPPSV…TPCAAEEQKL (253 aa)) are interaction with host SKP2. Residue Ser-2194 is modified to Phosphoserine; by host; in p56. Ser-2197, Ser-2201, Ser-2204, Ser-2207, and Ser-2210 each carry phosphoserine; by host; in p58. Positions 2206-2245 (LSAPSLKATCTANHDSPDAELIEANLLWRQEMGGNITRVE) are ISDR. The EIF2AK2/PKR-binding stretch occupies residues 2210-2275 (SLKATCTANH…REISVPAEIL (66 aa)). The interval 2249 to 2306 (KVVILDSFDPLVAEEDEREISVPAEILRKSRRFAQALPVWARPDYNPPLVETWKKPDY) is NS4B-binding. Disordered regions lie at residues 2312 to 2334 (HGCP…RTVV) and 2351 to 2408 (SFGS…WSTV). The span at 2315–2326 (PLPPPKSPPVPP) shows a compositional bias: pro residues. Position 2321 is a phosphoserine; by host (Ser-2321). Residues 2322–2325 (PPVP) carry the SH3-binding motif. The Nuclear localization signal signature appears at 2326–2334 (PPRKKRTVV). The interaction with host IFI27 stretch occupies residues 2332–2441 (TVVLTESTLS…TPCAAEEQKL (110 aa)). A compositionally biased stretch (low complexity) spans 2351 to 2369 (SFGSSSTSGITGDNTTTSS). A V3 region spans residues 2354 to 2377 (SSSTSGITGDNTTTSSEPAPSGCP). 2 positions are modified to phosphoserine; by host: Ser-2449 and Ser-2462. The 119-residue stretch at 2634–2752 (PMGFSYDTRC…ICESAGVQED (119 aa)) folds into the RdRp catalytic domain. Mg(2+) contacts are provided by Asp-2640, Asp-2738, and Asp-2739. Residues 2991–3011 (WIWFCLLLLAAGVGIYLLPNR) traverse the membrane as a helical segment.

Belongs to the hepacivirus polyprotein family. Homooligomer. Interacts with E1 (via C-terminus). Interacts with the non-structural protein 5A. Interacts (via N-terminus) with host STAT1 (via SH2 domain); this interaction results in decreased STAT1 phosphorylation and ubiquitin-mediated proteasome-dependent STAT1 degradation, leading to decreased IFN-stimulated gene transcription. Interacts with host STAT3; this interaction constitutively activates STAT3. Interacts with host LTBR receptor. Interacts with host TNFRSF1A receptor and possibly induces apoptosis. Interacts with host HNRPK. Interacts with host YWHAE. Interacts with host UBE3A/E6AP. Interacts with host DDX3X. Interacts with host APOA2. Interacts with host RXRA protein. Interacts with host SP110 isoform 3/Sp110b; this interaction sequesters the transcriptional corepressor SP110 away from the nucleus. Interacts with host CREB3 nuclear transcription protein; this interaction triggers cell transformation. Interacts with host ACY3. Interacts with host C1QR1. Interacts with host RBM24; this interaction, which enhances the interaction of the mature core protein with 5'-UTR, may inhibit viral translation and favor replication. Interacts with host EIF2AK2/PKR; this interaction induces the autophosphorylation of EIF2AK2. Part of the viral assembly initiation complex composed of NS2, E1, E2, NS3, NS4A, NS5A and the mature core protein. In terms of assembly, forms a heterodimer with envelope glycoprotein E2. Interacts with mature core protein. Interacts with protease NS2. The heterodimer E1/E2 interacts with host CLDN1; this interaction plays a role in viral entry into host cell. Interacts with host SPSB2 (via C-terminus). Part of the viral assembly initiation complex composed of NS2, E1, E2, NS3, NS4A, NS5A and the mature core protein. Interacts with host NEURL3; this interaction prevents E1 binding to glycoprotein E2. As to quaternary structure, forms a heterodimer with envelope glycoprotein E1. Interacts with host CD81 and SCARB1 receptors; these interactions play a role in viral entry into host cell. Interacts with host EIF2AK2/PKR; this interaction inhibits EIF2AK2 and probably allows the virus to evade the innate immune response. Interacts with host CD209/DC-SIGN and CLEC4M/DC-SIGNR. Interact with host SPCS1; this interaction is essential for viral particle assembly. Interacts with protease NS2. The heterodimer E1/E2 interacts with host CLDN1; this interaction plays a role in viral entry into host cell. Part of the viral assembly initiation complex composed of NS2, E1, E2, NS3, NS4A, NS5A and the mature core protein. Interacts with host SLC3A2/4F2hc; the interaction may facilitate viral entry into host cell. Interacts with human PLSCR1. Homohexamer. Homoheptamer. Interacts with protease NS2. In terms of assembly, homodimer. Interacts with host SPCS1; this interaction is essential for viral particle assembly. Interacts with envelope glycoprotein E1. Interacts with envelope glycoprotein E2. Interacts with viroporin p7. Interacts with serine protease/helicase NS3. Part of the replication complex composed of NS2, NS3, NS4A, NS4B, NS5A and the RNA-directed RNA polymerase embedded in an ER-derived membranous web. Part of the viral assembly initiation complex composed of NS2, E1, E2, NS3, NS4A, NS5A and the mature core protein. As to quaternary structure, interacts with protease NS2. Interacts with non-structural protein 4A; this interaction stabilizes the folding of NS3 serine protease. NS3-NS4A interaction is essential for NS3 activation and allows membrane anchorage of the latter. NS3/NS4A complex also prevents phosphorylation of host IRF3, thus preventing the establishment of dsRNA induced antiviral state. Interacts with host MAVS; this interaction leads to the cleavage and inhibition of host MAVS. Interacts with host TICAM1; this interaction leads to the cleavage and inhibition of host TICAM1. Interacts with host TANK-binding kinase/TBK1; this interaction results in the inhibition of the association between TBK1 and IRF3, which leads to the inhibition of IRF3 activation. Interacts with host RBM24. Part of the replication complex composed of NS2, NS3, NS4A, NS4B, NS5A and the RNA-directed RNA polymerase embedded in an ER-derived membranous web. Part of the viral assembly initiation complex composed of NS2, E1, E2, NS3, NS4A, NS5A and the mature core protein. Interacts with NS3 serine protease; this interaction stabilizes the folding of NS3 serine protease. NS3-NS4A interaction is essential for NS3 activation and allows membrane anchorage of the latter. Interacts with non-structural protein 5A (via N-terminus). Part of the replication complex composed of NS2, NS3, NS4A, NS4B, NS5A and the RNA-directed RNA polymerase embedded in an ER-derived membranous web. Part of the viral assembly initiation complex composed of NS2, E1, E2, NS3, NS4A, NS5A and the mature core protein. In terms of assembly, homomultimer. Interacts with non-structural protein NS5A. Interacts with host PLA2G4C; this interaction likely initiates the recruitment of replication complexes to lipid droplets. Interacts with host STING; this interaction disrupts the interaction between STING and TBK1 thereby suppressing the interferon signaling. Part of the replication complex composed of NS2, NS3, NS4A, NS4B, NS5A and the RNA-directed RNA polymerase embedded in an ER-derived membranous web. As to quaternary structure, monomer. Homodimer; dimerization is required for RNA-binding. Interacts with mature core protein. Interacts (via N-terminus) with non-structural protein 4A. Interacts with non-structural protein 4B. Interacts with RNA-directed RNA polymerase. Part of the viral assembly initiation complex composed of NS2, E1, E2, NS3, NS4A, NS5A and the mature core protein. Part of the replication complex composed of NS2, NS3, NS4A, NS4B, NS5A and the RNA-directed RNA polymerase. Interacts with host GRB2. Interacts with host BIN1. Interacts with host PIK3R1. Interacts with host SRCAP. Interacts with host FKBP8. Interacts with host VAPB. Interacts with host EIF2AK2/PKR; this interaction leads to disruption of EIF2AK2 dimerization by NS5A and probably allows the virus to evade the innate immune response. Interacts (via N-terminus) with host PACSIN2 (via N-terminus); this interaction attenuates protein kinase C alpha-mediated phosphorylation of PACSIN2 by disrupting the interaction between PACSIN2 and PRKCA. Interacts (via N-terminus) with host SRC kinase (via SH2 domain). Interacts with most Src-family kinases. Interacts with host IFI27 and SKP2; promotes the ubiquitin-mediated proteasomal degradation of NS5A. Interacts with host GPS2. Interacts with host TNFRSF21; this interaction allows the modulation by the virus of JNK, p38 MAPK, STAT3, and Akt signaling pathways in a DR6-dependent manner. Interacts (via N-terminus) with host CIDEB (via N-terminus); this interaction seems to regulate the association of HCV particles with APOE. Interacts with host CHKA/Choline Kinase-alpha; CHKA bridges host PI4KA and NS5A and potentiates NS5A-stimulated PI4KA activity, which then facilitates the targeting of the ternary complex to the ER for viral replication. Interacts with host SPSB2 (via C-terminus); this interaction targets NS5A for ubiquitination and degradation. Interacts with host RAB18; this interaction may promote the association of NS5A and other replicase components with lipid droplets. Interacts with host TRIM14; this interaction induces the degradation of NS5A. Homooligomer. Interacts with non-structural protein 5A. Interacts with host VAPB. Interacts with host PRK2/PKN2. Interacts with host HNRNPA1 and SEPT6; these interactions facilitate viral replication. Part of the replication complex composed of NS2, NS3, NS4A, NS4B, NS5A and the RNA-directed RNA polymerase. Initiates RNA transcription/replication at a flavin adenine dinucleotide (FAD), resulting in a 5'- FAD cap on viral RNAs. In this way, recognition of viral 5' RNA by host pattern recognition receptors can be bypassed, thereby evading activation of antiviral pathways. Zn(2+) is required as a cofactor. Mg(2+) serves as cofactor. In terms of processing, specific enzymatic cleavages in vivo yield mature proteins. The structural proteins, core, E1, E2 and p7 are produced by proteolytic processing by host signal peptidases. The core protein precursor is synthesized as a 23 kDa protein which is retained in the ER membrane through the hydrophobic signal peptide. Cleavage by the signal peptidase releases the 21 kDa mature core protein. The cleavage of the core protein precursor occurs between aminoacids 176 and 188 but the exact cleavage site is not known. Some degraded forms of the core protein appear as well during the course of infection. The other proteins (p7, NS2, NS3, NS4A, NS4B, NS5A and NS5B) are cleaved by the viral proteases. Autoprocessing between NS2 and NS3 is mediated by the NS2 cysteine protease catalytic domain and regulated by the NS3 N-terminal domain. Phosphorylated by host PKC and PKA. Post-translationally, ubiquitinated; mediated by UBE3A and leading to core protein subsequent proteasomal degradation. In terms of processing, highly N-glycosylated. Palmitoylation is required for NS2/3 autoprocessing and E2 recruitment to membranes. Post-translationally, palmitoylated. This modification may play a role in its polymerization or in protein-protein interactions. In terms of processing, cleaved by host caspases which are probably activated by the viral infection. Ubiquitinated. Ubiquitination, most probably at Lys-2350, mediated by host IFI27 and SKP2 leads to proteasomal degradation, restricting viral infection. Post-translationally, phosphorylated on serines in a basal form termed p56. p58 is a hyperphosphorylated form of p56. p56 and p58 coexist in the cell in roughly equivalent amounts. Hyperphosphorylation is dependent on the presence of NS4A. Host CSNK1A1/CKI-alpha or RPS6KB1 kinases may be responsible for NS5A phosphorylation. Phosphorylated NS5A is involved in viral replication. In terms of processing, tyrosine phosphorylation is essential for the interaction with host SRC. The N-terminus is phosphorylated by host PRK2/PKN2.

The protein resides in the host endoplasmic reticulum membrane. Its subcellular location is the host mitochondrion membrane. It is found in the virion. It localises to the host cytoplasm. The protein localises to the host nucleus. The protein resides in the host lipid droplet. Its subcellular location is the virion membrane. It is found in the host mitochondrion. It localises to the host cell membrane. The protein localises to the host perinuclear region. It carries out the reaction Hydrolysis of four peptide bonds in the viral precursor polyprotein, commonly with Asp or Glu in the P6 position, Cys or Thr in P1 and Ser or Ala in P1'.. It catalyses the reaction a ribonucleoside 5'-triphosphate + H2O = a ribonucleoside 5'-diphosphate + phosphate + H(+). The catalysed reaction is ATP + H2O = ADP + phosphate + H(+). The enzyme catalyses RNA(n) + a ribonucleoside 5'-triphosphate = RNA(n+1) + diphosphate. With respect to regulation, inhibited by the antiviral drug hexamethylene amiloride. Inhibition by amantadine appears to be genotype-dependent. Also inhibited by long-alkyl-chain iminosugar derivatives. Activity is up-regulated by PRK2/PKN2-mediated phosphorylation. Functionally, packages viral RNA to form a viral nucleocapsid, and promotes virion budding. Participates in the viral particle production as a result of its interaction with the non-structural protein 5A. Binds RNA and may function as a RNA chaperone to induce the RNA structural rearrangements taking place during virus replication. Modulates viral translation initiation by interacting with viral IRES and 40S ribosomal subunit. Affects various cell signaling pathways, host immunity and lipid metabolism. Prevents the establishment of cellular antiviral state by blocking the interferon-alpha/beta (IFN-alpha/beta) and IFN-gamma signaling pathways and by blocking the formation of phosphorylated STAT1 and promoting ubiquitin-mediated proteasome-dependent degradation of STAT1. Activates STAT3 leading to cellular transformation. Regulates the activity of cellular genes, including c-myc and c-fos. May repress the promoter of p53, and sequester CREB3 and SP110 isoform 3/Sp110b in the cytoplasm. Represses cell cycle negative regulating factor CDKN1A, thereby interrupting an important check point of normal cell cycle regulation. Targets transcription factors involved in the regulation of inflammatory responses and in the immune response: suppresses TNF-induced NF-kappa-B activation, and activates AP-1. Binds to dendritic cells (DCs) via C1QR1, resulting in down-regulation of T-lymphocytes proliferation. Alters lipid metabolism by interacting with hepatocellular proteins involved in lipid accumulation and storage. Induces up-regulation of FAS promoter activity, and thereby contributes to the increased triglyceride accumulation in hepatocytes (steatosis). In terms of biological role, forms a heterodimer with envelope glycoprotein E2, which mediates virus attachment to the host cell, virion internalization through clathrin-dependent endocytosis and fusion with host membrane. Fusion with the host cell is most likely mediated by both E1 and E2, through conformational rearrangements of the heterodimer required for fusion rather than a classical class II fusion mechanism. E1/E2 heterodimer binds host apolipoproteins such as APOB and APOE thereby forming a lipo-viro-particle (LVP). APOE associated to the LVP allows the initial virus attachment to cell surface receptors such as the heparan sulfate proteoglycans (HSPGs), syndecan-1 (SDC1), syndecan-1 (SDC2), the low-density lipoprotein receptor (LDLR) and scavenger receptor class B type I (SCARB1). The cholesterol transfer activity of SCARB1 allows E2 exposure and binding of E2 to SCARB1 and the tetraspanin CD81. E1/E2 heterodimer binding on CD81 activates the epithelial growth factor receptor (EGFR) signaling pathway. Diffusion of the complex E1-E2-EGFR-SCARB1-CD81 to the cell lateral membrane allows further interaction with Claudin 1 (CLDN1) and occludin (OCLN) to finally trigger HCV entry. Forms a heterodimer with envelope glycoprotein E1, which mediates virus attachment to the host cell, virion internalization through clathrin-dependent endocytosis and fusion with host membrane. Fusion with the host cell is most likely mediated by both E1 and E2, through conformational rearrangements of the heterodimer required for fusion rather than a classical class II fusion mechanism. The interaction between envelope glycoprotein E2 and host apolipoprotein E/APOE allows the proper assembly, maturation and infectivity of the viral particles. This interaction is probably promoted via the up-regulation of cellular autophagy by the virus. E1/E2 heterodimer binds host apolipoproteins such as APOB and APOE thereby forming a lipo-viro-particle (LVP). APOE associated to the LVP allows the initial virus attachment to cell surface receptors such as the heparan sulfate proteoglycans (HSPGs), syndecan-1 (SDC1), syndecan-1 (SDC2), the low-density lipoprotein receptor (LDLR) and scavenger receptor class B type I (SCARB1). The cholesterol transfer activity of SCARB1 allows E2 exposure and binding of E2 to SCARB1 and the tetraspanin CD81. E1/E2 heterodimer binding on CD81 activates the epithelial growth factor receptor (EGFR) signaling pathway. Diffusion of the complex E1-E2-EGFR-SCARB1-CD81 to the cell lateral membrane allows further interaction with Claudin 1 (CLDN1) and occludin (OCLN) to finally trigger HCV entry. Inhibits host EIF2AK2/PKR activation, preventing the establishment of an antiviral state. Viral ligand for CD209/DC-SIGN and CLEC4M/DC-SIGNR, which are respectively found on dendritic cells (DCs), and on liver sinusoidal endothelial cells and macrophage-like cells of lymph node sinuses. These interactions allow the capture of circulating HCV particles by these cells and subsequent facilitated transmission to permissive cells such as hepatocytes and lymphocyte subpopulations. The interaction between E2 and host amino acid transporter complex formed by SLC3A2 and SLC7A5/LAT1 may facilitate viral entry into host cell. Its function is as follows. Ion channel protein that acts as a viroporin and plays an essential role in the assembly, envelopment and secretion of viral particles. Regulates the host cell secretory pathway, which induces the intracellular retention of viral glycoproteins and favors assembly of viral particles. Creates a pore in acidic organelles and releases Ca(2+) and H(+) in the cytoplasm of infected cells, leading to a productive viral infection. High levels of cytoplasmic Ca(2+) may trigger membrane trafficking and transport of viral ER-associated proteins to viroplasms, sites of viral genome replication. This ionic imbalance induces the assembly of the inflammasome complex, which triggers the maturation of pro-IL-1beta into IL-1beta through the action of caspase-1. Targets also host mitochondria and induces mitochondrial depolarization. In addition of its role as a viroporin, acts as a lipid raft adhesion factor. Functionally, cysteine protease required for the proteolytic auto-cleavage between the non-structural proteins NS2 and NS3. The N-terminus of NS3 is required for the function of NS2 protease (active region NS2-3). Promotes the initiation of viral particle assembly by mediating the interaction between structural and non-structural proteins. In terms of biological role, displays three enzymatic activities: serine protease with a chymotrypsin-like fold, NTPase and RNA helicase. NS3 serine protease, in association with NS4A, is responsible for the cleavages of NS3-NS4A, NS4A-NS4B, NS4B-NS5A and NS5A-NS5B. The NS3/NS4A complex prevents phosphorylation of host IRF3, thus preventing the establishment of dsRNA induced antiviral state. The NS3/NS4A complex induces host amino acid transporter component SLC3A2, thus contributing to HCV propagation. NS3 RNA helicase binds to RNA and unwinds both dsDNA and dsRNA in the 3' to 5' direction, and likely resolves RNA complicated stable secondary structures in the template strand. Binds a single ATP and catalyzes the unzipping of a single base pair of dsRNA. Inhibits host antiviral proteins TBK1 and IRF3 thereby preventing the establishment of an antiviral state. Cleaves host MAVS/CARDIF thereby preventing the establishment of an antiviral state. Cleaves host TICAM1/TRIF, thereby disrupting TLR3 signaling and preventing the establishment of an antiviral state. The NS3/NS4A complex prevents phosphorylation of host IRF3, thus preventing the establishment of dsRNA induced antiviral state. The NS3/NS4A complex induces host amino acid transporter component SLC3A2, thus contributing to HCV propagation. Its function is as follows. Induces a specific membrane alteration that serves as a scaffold for the virus replication complex. This membrane alteration gives rise to the so-called ER-derived membranous web that contains the replication complex. NS4B self-interaction contributes to its function in membranous web formation. Promotes host TRIF protein degradation in a CASP8-dependent manner thereby inhibiting host TLR3-mediated interferon signaling. Disrupts the interaction between STING and TBK1 contributing to the inhibition of interferon signaling. Functionally, phosphorylated protein that is indispensable for viral replication and assembly. Both hypo- and hyperphosphorylated states are required for the viral life cycle. The hyperphosphorylated form of NS5A is an inhibitor of viral replication. Involved in RNA-binding and especially in binding to the viral genome. Zinc is essential for RNA-binding. Participates in the viral particle production as a result of its interaction with the mature viral core protein. Its interaction with host VAPB may target the viral replication complex to vesicles. Down-regulates viral IRES translation initiation. Mediates interferon resistance, presumably by interacting with and inhibiting host EIF2AK2/PKR. Prevents BIN1-induced apoptosis. Acts as a transcriptional activator of some host genes important for viral replication when localized in the nucleus. Via the interaction with host PACSIN2, modulates lipid droplet formation in order to promote virion assembly. Modulates TNFRSF21/DR6 signaling pathway for viral propagation. In terms of biological role, RNA-dependent RNA polymerase that performs primer-template recognition and RNA synthesis during viral replication. Initiates RNA transcription/replication at a flavin adenine dinucleotide (FAD), resulting in a 5'- FAD cap on viral RNAs. In this way, recognition of viral 5' RNA by host pattern recognition receptors can be bypassed, thereby evading activation of antiviral pathways. The sequence is that of Genome polyprotein from Homo sapiens (Human).